Here is a 153-residue protein sequence, read N- to C-terminus: Peptide methionine sulfoxide reductase MsrA (153 aa).

Residue Cys10 is part of the active site.

It belongs to the MsrA Met sulfoxide reductase family.

It catalyses the reaction L-methionyl-[protein] + [thioredoxin]-disulfide + H2O = L-methionyl-(S)-S-oxide-[protein] + [thioredoxin]-dithiol. The enzyme catalyses [thioredoxin]-disulfide + L-methionine + H2O = L-methionine (S)-S-oxide + [thioredoxin]-dithiol. Functionally, has an important function as a repair enzyme for proteins that have been inactivated by oxidation. Catalyzes the reversible oxidation-reduction of methionine sulfoxide in proteins to methionine. This is Peptide methionine sulfoxide reductase MsrA from Methanococcoides burtonii (strain DSM 6242 / NBRC 107633 / OCM 468 / ACE-M).